A 211-amino-acid chain; its full sequence is Large ribosomal subunit protein bL9 (211 aa).

Positions 180-211 (DDIGAAGMDDDDDDAPAPAQADPSSEESSEED) are disordered.

It belongs to the bacterial ribosomal protein bL9 family.

Functionally, binds to the 23S rRNA. The polypeptide is Large ribosomal subunit protein bL9 (Jannaschia sp. (strain CCS1)).